The sequence spans 494 residues: MSAPAGRLQPQRFAALPNPVTAENKFWRSFKVPVVAKEYSAITSIHFSAESPYDFAVTSGARVQIYGASSRSVKKTIARFKDTAYSGNIRKDGKLLLAGDATGLVQIFDLSTRSILRALDAHQFPVHVTQFCPYANTTFLSGSDDKTVKVWDLSTGAVQYDLSGHEDYVRTASWMSATRLVSGGYDGTIRLWDTRIADPEVMSFSHGEAIDVVLPMQSGSTVISAGGPSIKVWDLVAGRQTPTKKLSNHQKSITCLAMNSENTRLLSGGLDGHVKIYNISDWKVVHGMKYSGPILSMGLSPDSCNLVVGMSNGTLSQRTRRITKQTSSKTPFLGGVGSAFGVVGKKKQIYKGENDEFYVEEARRKRLRPFDKALKSFCYSDALDMVLENGSPVLIITMLIELLHVGGLRIALSNRDDLSLTPLINFLRKYIRDPRFSETLCIVTSTILDIYGAALGGSVMVENAISKLREKVEQEVAVTQRANELVGMLQMLSA.

WD repeat units lie at residues 37-76 (KEYS…VKKT), 79-118 (RFKD…ILRA), 121-161 (AHQF…VQYD), 164-202 (GHED…PEVM), 205-243 (SHGE…QTPT), 248-287 (NHQK…VVHG), and 289-328 (KYSG…QTSS).

As to quaternary structure, component of the ribosomal small subunit (SSU) processome.

It is found in the nucleus. Its subcellular location is the nucleolus. In terms of biological role, involved in nucleolar processing of pre-18S ribosomal RNA. Required for optimal pre-ribosomal RNA transcription by RNA polymerase I together with a subset of U3 proteins required for transcription (t-UTPs). This chain is U3 small nucleolar RNA-associated protein 15 (utp15), found in Schizosaccharomyces pombe (strain 972 / ATCC 24843) (Fission yeast).